The primary structure comprises 447 residues: Gamma-glutamyl phosphate reductase (447 aa).

This sequence belongs to the gamma-glutamyl phosphate reductase family.

It localises to the cytoplasm. The enzyme catalyses L-glutamate 5-semialdehyde + phosphate + NADP(+) = L-glutamyl 5-phosphate + NADPH + H(+). It functions in the pathway amino-acid biosynthesis; L-proline biosynthesis; L-glutamate 5-semialdehyde from L-glutamate: step 2/2. Its function is as follows. Catalyzes the NADPH-dependent reduction of L-glutamate 5-phosphate into L-glutamate 5-semialdehyde and phosphate. The product spontaneously undergoes cyclization to form 1-pyrroline-5-carboxylate. The chain is Gamma-glutamyl phosphate reductase from Methanosarcina acetivorans (strain ATCC 35395 / DSM 2834 / JCM 12185 / C2A).